The sequence spans 364 residues: UDP-N-acetylglucosamine--N-acetylmuramyl-(pentapeptide) pyrophosphoryl-undecaprenol N-acetylglucosamine transferase (364 aa).

UDP-N-acetyl-alpha-D-glucosamine-binding positions include 10–12, asparagine 124, arginine 161, serine 195, and glutamine 291; that span reads TAG.

Belongs to the glycosyltransferase 28 family. MurG subfamily.

The protein localises to the cell membrane. It carries out the reaction di-trans,octa-cis-undecaprenyl diphospho-N-acetyl-alpha-D-muramoyl-L-alanyl-D-glutamyl-meso-2,6-diaminopimeloyl-D-alanyl-D-alanine + UDP-N-acetyl-alpha-D-glucosamine = di-trans,octa-cis-undecaprenyl diphospho-[N-acetyl-alpha-D-glucosaminyl-(1-&gt;4)]-N-acetyl-alpha-D-muramoyl-L-alanyl-D-glutamyl-meso-2,6-diaminopimeloyl-D-alanyl-D-alanine + UDP + H(+). It functions in the pathway cell wall biogenesis; peptidoglycan biosynthesis. Functionally, cell wall formation. Catalyzes the transfer of a GlcNAc subunit on undecaprenyl-pyrophosphoryl-MurNAc-pentapeptide (lipid intermediate I) to form undecaprenyl-pyrophosphoryl-MurNAc-(pentapeptide)GlcNAc (lipid intermediate II). This chain is UDP-N-acetylglucosamine--N-acetylmuramyl-(pentapeptide) pyrophosphoryl-undecaprenol N-acetylglucosamine transferase, found in Streptomyces coelicolor (strain ATCC BAA-471 / A3(2) / M145).